Here is a 246-residue protein sequence, read N- to C-terminus: Pyrroloquinoline-quinone synthase (246 aa).

It belongs to the PqqC family.

It catalyses the reaction 6-(2-amino-2-carboxyethyl)-7,8-dioxo-1,2,3,4,7,8-hexahydroquinoline-2,4-dicarboxylate + 3 O2 = pyrroloquinoline quinone + 2 H2O2 + 2 H2O + H(+). Its pathway is cofactor biosynthesis; pyrroloquinoline quinone biosynthesis. Functionally, ring cyclization and eight-electron oxidation of 3a-(2-amino-2-carboxyethyl)-4,5-dioxo-4,5,6,7,8,9-hexahydroquinoline-7,9-dicarboxylic-acid to PQQ. In Acidiphilium cryptum (strain JF-5), this protein is Pyrroloquinoline-quinone synthase.